Consider the following 315-residue polypeptide: Homoserine kinase (315 aa).

ATP is bound at residue proline 96–alanine 106.

The protein belongs to the GHMP kinase family. Homoserine kinase subfamily.

It is found in the cytoplasm. It catalyses the reaction L-homoserine + ATP = O-phospho-L-homoserine + ADP + H(+). It functions in the pathway amino-acid biosynthesis; L-threonine biosynthesis; L-threonine from L-aspartate: step 4/5. Its function is as follows. Catalyzes the ATP-dependent phosphorylation of L-homoserine to L-homoserine phosphate. This is Homoserine kinase from Mycolicibacterium paratuberculosis (strain ATCC BAA-968 / K-10) (Mycobacterium paratuberculosis).